A 95-amino-acid chain; its full sequence is Large ribosomal subunit protein uL23 (95 aa).

This sequence belongs to the universal ribosomal protein uL23 family. As to quaternary structure, part of the 50S ribosomal subunit. Contacts protein L29, and trigger factor when it is bound to the ribosome.

Its function is as follows. One of the early assembly proteins it binds 23S rRNA. One of the proteins that surrounds the polypeptide exit tunnel on the outside of the ribosome. Forms the main docking site for trigger factor binding to the ribosome. The chain is Large ribosomal subunit protein uL23 from Desulfitobacterium hafniense (strain DSM 10664 / DCB-2).